We begin with the raw amino-acid sequence, 237 residues long: Lectin (237 aa).

Positions 8 and 10 each coordinate Mn(2+). The Ca(2+) site is built by Asp10, Tyr12, Asn14, and Asp19. 2 residues coordinate a carbohydrate: Tyr12 and Asn14. Mn(2+) is bound by residues Asp19 and His24. 98–100 (GLY) contributes to the a carbohydrate binding site. Ca(2+) is bound at residue Asp208. Gly227 and Arg228 together coordinate a carbohydrate.

This sequence belongs to the leguminous lectin family. In terms of assembly, homotetramer; dimer of dimers. Concanavalin A-like lectins of the Diocleinae subtribe undergo proteolytic processing referred to as circular permutation. The propeptide is split into an N-terminal and a C-terminal part, the gamma and beta chain, respectively. These are then religated in beta-gamma order to form the mature alpha chain. The beta and gamma chains can often be detected in cell extracts. Residues 1-118 of the mature chain, as displayed here, probably constitute the beta chain in the propeptide, residues 119-237 the gamma chain.

Its function is as follows. D-mannose/D-glucose-binding lectin with hemagglutinating activity towards rabbit and human erythrocytes. In rats, induces dose-dependent paw edema. Has low cytotoxicity against Artemisia sp. The protein is Lectin of Macropsychanthus comosus (Sea purse).